A 40-amino-acid chain; its full sequence is uncharacterized protein (40 aa).

This is an uncharacterized protein from Myxococcus xanthus (strain DK1622).